Consider the following 250-residue polypeptide: MKKFYIAANWKMNMNRAEAKQLATEMKAGLKDGKNKYMIAPSFTLLQDVASVLKGSNILLGAQNMGLEEKGAHTGEVSVLQLLDVGVQAVILGHSERRHIYKETDDLINKKVKLALKHGLEVILCVGELLEEREAGHAEAVCERQIKKGLAEVSAKDLDKVTIAYEPVWAIGTGKNASPEDADAIHSSIRKTLAALYGEKAAKNMIIQYGGSMKPENAAGLLKKHNIDGGLIGGAGLKTETFLPIALFSE.

9 to 11 (NWK) contacts substrate. The Electrophile role is filled by His-94. Residue Glu-166 is the Proton acceptor of the active site. Substrate is bound by residues Gly-172, Ser-212, and 233 to 234 (GG).

Belongs to the triosephosphate isomerase family. Homodimer.

It is found in the cytoplasm. It carries out the reaction D-glyceraldehyde 3-phosphate = dihydroxyacetone phosphate. It participates in carbohydrate biosynthesis; gluconeogenesis. The protein operates within carbohydrate degradation; glycolysis; D-glyceraldehyde 3-phosphate from glycerone phosphate: step 1/1. In terms of biological role, involved in the gluconeogenesis. Catalyzes stereospecifically the conversion of dihydroxyacetone phosphate (DHAP) to D-glyceraldehyde-3-phosphate (G3P). The chain is Triosephosphate isomerase from Treponema denticola (strain ATCC 35405 / DSM 14222 / CIP 103919 / JCM 8153 / KCTC 15104).